The chain runs to 28 residues: Cytochrome c oxidase subunit 5B, mitochondrial (28 aa).

Belongs to the cytochrome c oxidase subunit 5B family. In terms of assembly, component of the cytochrome c oxidase (complex IV, CIV), a multisubunit enzyme composed of a catalytic core of 3 subunits and several supernumerary subunits. The complex exists as a monomer or a dimer and forms supercomplexes (SCs) in the inner mitochondrial membrane with ubiquinol-cytochrome c oxidoreductase (cytochrome b-c1 complex, complex III, CIII).

It is found in the mitochondrion inner membrane. The protein operates within energy metabolism; oxidative phosphorylation. In terms of biological role, component of the cytochrome c oxidase, the last enzyme in the mitochondrial electron transport chain which drives oxidative phosphorylation. The respiratory chain contains 3 multisubunit complexes succinate dehydrogenase (complex II, CII), ubiquinol-cytochrome c oxidoreductase (cytochrome b-c1 complex, complex III, CIII) and cytochrome c oxidase (complex IV, CIV), that cooperate to transfer electrons derived from NADH and succinate to molecular oxygen, creating an electrochemical gradient over the inner membrane that drives transmembrane transport and the ATP synthase. Cytochrome c oxidase is the component of the respiratory chain that catalyzes the reduction of oxygen to water. Electrons originating from reduced cytochrome c in the intermembrane space (IMS) are transferred via the dinuclear copper A center (CU(A)) of subunit 2 and heme A of subunit 1 to the active site in subunit 1, a binuclear center (BNC) formed by heme A3 and copper B (CU(B)). The BNC reduces molecular oxygen to 2 water molecules using 4 electrons from cytochrome c in the IMS and 4 protons from the mitochondrial matrix. This Solanum tuberosum (Potato) protein is Cytochrome c oxidase subunit 5B, mitochondrial.